The following is a 355-amino-acid chain: DNA-directed RNA polymerase subunit alpha (355 aa).

An alpha N-terminal domain (alpha-NTD) region spans residues 1 to 248 (MYYDDGIPVF…EQLQPFISSD (248 aa)). Residues 267 to 355 (YDPILLRKVD…ELARQHTDED (89 aa)) are alpha C-terminal domain (alpha-CTD).

Belongs to the RNA polymerase alpha chain family. As to quaternary structure, homodimer. The RNAP catalytic core consists of 2 alpha, 1 beta, 1 beta' and 1 omega subunit. When a sigma factor is associated with the core the holoenzyme is formed, which can initiate transcription.

The catalysed reaction is RNA(n) + a ribonucleoside 5'-triphosphate = RNA(n+1) + diphosphate. Functionally, DNA-dependent RNA polymerase catalyzes the transcription of DNA into RNA using the four ribonucleoside triphosphates as substrates. The protein is DNA-directed RNA polymerase subunit alpha of Wolbachia sp. subsp. Brugia malayi (strain TRS).